We begin with the raw amino-acid sequence, 295 residues long: Trimeric intracellular cation channel type A (295 aa).

Residues 1–18 lie on the Lumenal side of the membrane; it reads MELLSALSLGELALSFSR. Residues 19–39 form a helical membrane-spanning segment; that stretch reads VPLFPVFDLSYFIVSILYLKY. The Cytoplasmic portion of the chain corresponds to 40 to 51; sequence EPGAVELSRRHP. A helical membrane pass occupies residues 52 to 72; it reads VASWLCAMLHCFGSYILADLL. Over 73–85 the chain is Lumenal; it reads LGEPLIDYFSNNS. Glycine 74 contributes to the Ca(2+) binding site. The chain crosses the membrane as a helical span at residues 86–106; sequence SILLASAVWYLIFFCPLDLFY. Residues 107 to 144 are Cytoplasmic-facing; it reads KCVCFLPVKLIFVAMKEVVRVRKIAVGIHHAHHHYHHG. Lysine 122 and arginine 126 together coordinate a 1,2-diacyl-sn-glycero-3-phospho-(1D-myo-inositol-4,5-bisphosphate). A helical transmembrane segment spans residues 145–165; it reads WFIMIATGWVKGSGVALLSNV. Topologically, residues 166-178 are lumenal; it reads EQLLRGVWKPETN. A helical transmembrane segment spans residues 179 to 199; sequence EILHMSFPTKASLYGAILFTL. At 200-209 the chain is on the cytoplasmic side; it reads QQTRWLPVSK. Residues 210-230 form a helical membrane-spanning segment; that stretch reads ASLIFIFTMFMVSCKVFLTAT. Topologically, residues 231-234 are lumenal; the sequence is HSHS. Residues 235–255 traverse the membrane as a helical segment; that stretch reads SPFDVLEAYVCPVLFGTGSGG. The Cytoplasmic portion of the chain corresponds to 256–295; it reads DHPQDNHGAWPGGPPSGALATKSKEELSEGSRKKKTKKAD. The tract at residues 256-295 is disordered; the sequence is DHPQDNHGAWPGGPPSGALATKSKEELSEGSRKKKTKKAD. The span at 277 to 286 shows a compositional bias: basic and acidic residues; it reads KSKEELSEGS.

This sequence belongs to the TMEM38 family. Homotrimer; conformation seems to be controled by binding to diacylglycerol (DAG).

The protein resides in the sarcoplasmic reticulum membrane. Its subcellular location is the nucleus membrane. The enzyme catalyses K(+)(in) = K(+)(out). Channel activity is activated by a change of voltage within the sarcoplasmic reticulum lumen and blocked by luminal high Ca(2+) levels. Intracellular monovalent cation channel required for maintenance of rapid intracellular calcium release. Acts as a potassium counter-ion channel that functions in synchronization with calcium release from intracellular stores. Opened by a change of voltage within the sarcoplasmic reticulum lumen. The polypeptide is Trimeric intracellular cation channel type A (Oryctolagus cuniculus (Rabbit)).